A 319-amino-acid polypeptide reads, in one-letter code: Lipopolysaccharide heptosyltransferase 1 (319 aa).

Residues Thr-187, Thr-188, Lys-192, Glu-222, Met-242, Asp-261, Thr-262, Gly-263, and His-266 each coordinate ADP-L-glycero-beta-D-manno-heptose.

Belongs to the glycosyltransferase 9 family.

The protein resides in the cell inner membrane. The enzyme catalyses an alpha-Kdo-(2-&gt;4)-alpha-Kdo-(2-&gt;6)-lipid A + ADP-L-glycero-beta-D-manno-heptose = an L-alpha-D-Hep-(1-&gt;5)-[alpha-Kdo-(2-&gt;4)]-alpha-Kdo-(2-&gt;6)-lipid A + ADP + H(+). The catalysed reaction is alpha-Kdo-(2-&gt;4)-alpha-Kdo-(2-&gt;6)-lipid A (E. coli) + ADP-L-glycero-beta-D-manno-heptose = L-alpha-D-Hep-(1-&gt;5)-[alpha-Kdo-(2-&gt;4)]-alpha-Kdo-(2-&gt;6)-lipid A (E. coli) + ADP + H(+). The protein operates within bacterial outer membrane biogenesis; LPS core biosynthesis. Its function is as follows. Glycosyltransferase involved in the biosynthesis of the core oligosaccharide region of lipopolysaccharide (LPS). Catalyzes the addition of the first heptose unit to one 3-deoxy-D-manno-octulosonic acid (Kdo) residue of the Kdo2-lipid A module. The analog ADP-mannose can serve as an alternative donor in place of ADP-L-glycero-D-manno-heptose for the glycosylation of Kdo2-lipid A. Displays no activity with ADP-glucose, GDP-mannose, UDP-glucose or UDP-galactose. The protein is Lipopolysaccharide heptosyltransferase 1 of Escherichia coli (strain K12).